A 253-amino-acid polypeptide reads, in one-letter code: Imidazole glycerol phosphate synthase subunit HisF (253 aa).

Residues D11 and D130 contribute to the active site.

Belongs to the HisA/HisF family. Heterodimer of HisH and HisF.

The protein resides in the cytoplasm. It catalyses the reaction 5-[(5-phospho-1-deoxy-D-ribulos-1-ylimino)methylamino]-1-(5-phospho-beta-D-ribosyl)imidazole-4-carboxamide + L-glutamine = D-erythro-1-(imidazol-4-yl)glycerol 3-phosphate + 5-amino-1-(5-phospho-beta-D-ribosyl)imidazole-4-carboxamide + L-glutamate + H(+). Its pathway is amino-acid biosynthesis; L-histidine biosynthesis; L-histidine from 5-phospho-alpha-D-ribose 1-diphosphate: step 5/9. In terms of biological role, IGPS catalyzes the conversion of PRFAR and glutamine to IGP, AICAR and glutamate. The HisF subunit catalyzes the cyclization activity that produces IGP and AICAR from PRFAR using the ammonia provided by the HisH subunit. In Myxococcus xanthus (strain DK1622), this protein is Imidazole glycerol phosphate synthase subunit HisF.